Consider the following 211-residue polypeptide: Thiamine-phosphate synthase (211 aa).

Residues 37-41 (QLRIK) and Asn-69 contribute to the 4-amino-2-methyl-5-(diphosphooxymethyl)pyrimidine site. Mg(2+) is bound by residues Asp-70 and Asp-89. Residue Ser-108 coordinates 4-amino-2-methyl-5-(diphosphooxymethyl)pyrimidine. Residue 134-136 (TQT) participates in 2-[(2R,5Z)-2-carboxy-4-methylthiazol-5(2H)-ylidene]ethyl phosphate binding. Lys-137 is a binding site for 4-amino-2-methyl-5-(diphosphooxymethyl)pyrimidine. 2-[(2R,5Z)-2-carboxy-4-methylthiazol-5(2H)-ylidene]ethyl phosphate contacts are provided by residues Gly-166 and 186–187 (VS).

The protein belongs to the thiamine-phosphate synthase family. Mg(2+) is required as a cofactor.

The enzyme catalyses 2-[(2R,5Z)-2-carboxy-4-methylthiazol-5(2H)-ylidene]ethyl phosphate + 4-amino-2-methyl-5-(diphosphooxymethyl)pyrimidine + 2 H(+) = thiamine phosphate + CO2 + diphosphate. It carries out the reaction 2-(2-carboxy-4-methylthiazol-5-yl)ethyl phosphate + 4-amino-2-methyl-5-(diphosphooxymethyl)pyrimidine + 2 H(+) = thiamine phosphate + CO2 + diphosphate. The catalysed reaction is 4-methyl-5-(2-phosphooxyethyl)-thiazole + 4-amino-2-methyl-5-(diphosphooxymethyl)pyrimidine + H(+) = thiamine phosphate + diphosphate. It functions in the pathway cofactor biosynthesis; thiamine diphosphate biosynthesis; thiamine phosphate from 4-amino-2-methyl-5-diphosphomethylpyrimidine and 4-methyl-5-(2-phosphoethyl)-thiazole: step 1/1. Functionally, condenses 4-methyl-5-(beta-hydroxyethyl)thiazole monophosphate (THZ-P) and 2-methyl-4-amino-5-hydroxymethyl pyrimidine pyrophosphate (HMP-PP) to form thiamine monophosphate (TMP). The polypeptide is Thiamine-phosphate synthase (Escherichia coli (strain SE11)).